We begin with the raw amino-acid sequence, 92 residues long: C-C motif chemokine 3 (92 aa).

The N-terminal stretch at 1–23 (MQVSTAALAVLLCTMALCNQFSA) is a signal peptide. 2 disulfides stabilise this stretch: Cys33–Cys57 and Cys34–Cys73.

This sequence belongs to the intercrine beta (chemokine CC) family. Self-associates. Also heterodimer of MIP-1-alpha(4-69) and MIP-1-beta(3-69). Interacts with CCR1. In terms of processing, N-terminal processed form LD78-alpha(4-69) is produced by proteolytic cleavage after secretion from HTLV1-transformed T-cells.

Its subcellular location is the secreted. Functionally, monokine with inflammatory and chemokinetic properties. Binds to CCR1, CCR4 and CCR5. One of the major HIV-suppressive factors produced by CD8+ T-cells. Recombinant MIP-1-alpha induces a dose-dependent inhibition of different strains of HIV-1, HIV-2, and simian immunodeficiency virus (SIV). This Homo sapiens (Human) protein is C-C motif chemokine 3 (CCL3).